The sequence spans 319 residues: Mitochondrial thiamine pyrophosphate carrier 1 (319 aa).

Solcar repeat units lie at residues 12–110 (GQRY…VTQS), 121–207 (PQPA…VRVP), and 214–309 (PFGS…VLKI). Helical transmembrane passes span 17-35 (VVAA…VAPL), 91-107 (LLYI…YRTV), 127-147 (FVSG…FDLL), 182-201 (GVSA…FATY), 221-237 (TAGV…VFPL), and 284-301 (GLTV…VTMW).

It belongs to the mitochondrial carrier (TC 2.A.29) family.

It localises to the mitochondrion inner membrane. In terms of biological role, mitochondrial transporter that mediates uptake of thiamine pyrophosphate (ThPP) into mitochondria. The protein is Mitochondrial thiamine pyrophosphate carrier 1 (TPC1) of Coccidioides immitis (strain RS) (Valley fever fungus).